The primary structure comprises 207 residues: Small ribosomal subunit protein uS4 (207 aa).

The segment at 33-54 (KLDSKPGQHGRTSGARTSDYGN) is disordered. The span at 42–53 (GRTSGARTSDYG) shows a compositional bias: polar residues. The S4 RNA-binding domain occupies 97 to 157 (SRLDNVVYRM…EKSKKQVRIA (61 aa)).

It belongs to the universal ribosomal protein uS4 family. As to quaternary structure, part of the 30S ribosomal subunit. Contacts protein S5. The interaction surface between S4 and S5 is involved in control of translational fidelity.

In terms of biological role, one of the primary rRNA binding proteins, it binds directly to 16S rRNA where it nucleates assembly of the body of the 30S subunit. Its function is as follows. With S5 and S12 plays an important role in translational accuracy. The sequence is that of Small ribosomal subunit protein uS4 from Ralstonia pickettii (strain 12J).